The sequence spans 41 residues: uncharacterized protein (41 aa).

This is an uncharacterized protein from Archaeoglobus fulgidus (strain ATCC 49558 / DSM 4304 / JCM 9628 / NBRC 100126 / VC-16).